Consider the following 348-residue polypeptide: Protein RecA (348 aa).

Residue 66 to 73 (GPESSGKT) coordinates ATP.

It belongs to the RecA family.

It is found in the cytoplasm. Its function is as follows. Can catalyze the hydrolysis of ATP in the presence of single-stranded DNA, the ATP-dependent uptake of single-stranded DNA by duplex DNA, and the ATP-dependent hybridization of homologous single-stranded DNAs. It interacts with LexA causing its activation and leading to its autocatalytic cleavage. The polypeptide is Protein RecA (Neisseria meningitidis serogroup A / serotype 4A (strain DSM 15465 / Z2491)).